The following is an 848-amino-acid chain: Translation initiation factor IF-2 (848 aa).

Residues 90–253 (RTYIKRAELQ…PKEKRHAFER (164 aa)) are disordered. Low complexity predominate over residues 105-170 (EAPAPEEPVQ…SAEPAIAPED (66 aa)). Basic residues-rich tracts occupy residues 204–215 (PKKKQAGHRGPR) and 236–248 (KPLR…KEKR). One can recognise a tr-type G domain in the interval 344 to 511 (KRAPVVSVMG…AVLLQAEILE (168 aa)). Residues 353–360 (GHVDHGKT) are G1. Position 353–360 (353–360 (GHVDHGKT)) interacts with GTP. A G2 region spans residues 378–382 (GITQH). The tract at residues 399 to 402 (DTPG) is G3. GTP-binding positions include 399 to 403 (DTPGH) and 453 to 456 (NKMD). The tract at residues 453–456 (NKMD) is G4. A G5 region spans residues 489–491 (SAH).

It belongs to the TRAFAC class translation factor GTPase superfamily. Classic translation factor GTPase family. IF-2 subfamily.

It is found in the cytoplasm. One of the essential components for the initiation of protein synthesis. Protects formylmethionyl-tRNA from spontaneous hydrolysis and promotes its binding to the 30S ribosomal subunits. Also involved in the hydrolysis of GTP during the formation of the 70S ribosomal complex. The polypeptide is Translation initiation factor IF-2 (Marinobacter nauticus (strain ATCC 700491 / DSM 11845 / VT8) (Marinobacter aquaeolei)).